A 120-amino-acid polypeptide reads, in one-letter code: Crustacean hyperglycemic hormones 4 (120 aa).

An N-terminal signal peptide occupies residues 1–26 (MVALNTLSAVSAALLVLAASPSPASA). 3 disulfide bridges follow: Cys53–Cys89, Cys69–Cys85, and Cys72–Cys98. Val118 bears the Valine amide mark.

It belongs to the arthropod CHH/MIH/GIH/VIH hormone family.

It is found in the secreted. Functionally, hormone found in the sinus gland of isopods and decapods which controls the blood sugar level. Has a secretagogue action over the amylase released from the midgut gland. May act as a stress hormone and may be involved in the control of molting and reproduction. This chain is Crustacean hyperglycemic hormones 4 (CHH4), found in Penaeus monodon (Giant tiger prawn).